The following is a 338-amino-acid chain: Anthranilate phosphoribosyltransferase (338 aa).

5-phospho-alpha-D-ribose 1-diphosphate-binding positions include G81, G84–D85, T89, N91–T94, K109–S117, and S121. Residue G81 coordinates anthranilate. Mg(2+) is bound at residue S93. N112 contributes to the anthranilate binding site. Residue R167 coordinates anthranilate. 2 residues coordinate Mg(2+): D226 and E227.

This sequence belongs to the anthranilate phosphoribosyltransferase family. As to quaternary structure, homodimer. Mg(2+) serves as cofactor.

It catalyses the reaction N-(5-phospho-beta-D-ribosyl)anthranilate + diphosphate = 5-phospho-alpha-D-ribose 1-diphosphate + anthranilate. The protein operates within amino-acid biosynthesis; L-tryptophan biosynthesis; L-tryptophan from chorismate: step 2/5. Its function is as follows. Catalyzes the transfer of the phosphoribosyl group of 5-phosphorylribose-1-pyrophosphate (PRPP) to anthranilate to yield N-(5'-phosphoribosyl)-anthranilate (PRA). This Alkalilimnicola ehrlichii (strain ATCC BAA-1101 / DSM 17681 / MLHE-1) protein is Anthranilate phosphoribosyltransferase.